A 273-amino-acid polypeptide reads, in one-letter code: Large ribosomal subunit protein uL2 (273 aa).

Disordered stretches follow at residues 31–50 and 221–273; these read APLL…GRIT and RGTA…RRGK. Basic residues predominate over residues 253–273; the sequence is KGKKTRHNKRTDKYIVRRRGK.

The protein belongs to the universal ribosomal protein uL2 family. As to quaternary structure, part of the 50S ribosomal subunit. Forms a bridge to the 30S subunit in the 70S ribosome.

Functionally, one of the primary rRNA binding proteins. Required for association of the 30S and 50S subunits to form the 70S ribosome, for tRNA binding and peptide bond formation. It has been suggested to have peptidyltransferase activity; this is somewhat controversial. Makes several contacts with the 16S rRNA in the 70S ribosome. The polypeptide is Large ribosomal subunit protein uL2 (Actinobacillus pleuropneumoniae serotype 7 (strain AP76)).